A 302-amino-acid polypeptide reads, in one-letter code: Probable 5-dehydro-4-deoxyglucarate dehydratase (302 aa).

This sequence belongs to the DapA family.

The enzyme catalyses 5-dehydro-4-deoxy-D-glucarate + H(+) = 2,5-dioxopentanoate + CO2 + H2O. Its pathway is carbohydrate acid metabolism; D-glucarate degradation; 2,5-dioxopentanoate from D-glucarate: step 2/2. The sequence is that of Probable 5-dehydro-4-deoxyglucarate dehydratase from Rhizobium rhizogenes (strain K84 / ATCC BAA-868) (Agrobacterium radiobacter).